A 546-amino-acid polypeptide reads, in one-letter code: CTP synthase (546 aa).

Positions 1–265 (MTKYVFVTGG…DEIVCHKLNI (265 aa)) are amidoligase domain. Position 13 (Ser-13) interacts with CTP. Ser-13 serves as a coordination point for UTP. ATP-binding positions include 14-19 (SLGKGI) and Asp-71. The Mg(2+) site is built by Asp-71 and Glu-139. CTP contacts are provided by residues 146–148 (DIE), 186–191 (KTKPTQ), and Lys-222. UTP-binding positions include 186–191 (KTKPTQ) and Lys-222. Positions 290 to 543 (NIAFVGKYVD…VRAALAHQQK (254 aa)) constitute a Glutamine amidotransferase type-1 domain. Gly-351 contacts L-glutamine. Residue Cys-378 is the Nucleophile; for glutamine hydrolysis of the active site. Residues 379-382 (LGMQ), Glu-402, and Arg-469 each bind L-glutamine. Residues His-516 and Glu-518 contribute to the active site.

Belongs to the CTP synthase family. As to quaternary structure, homotetramer.

The enzyme catalyses UTP + L-glutamine + ATP + H2O = CTP + L-glutamate + ADP + phosphate + 2 H(+). It carries out the reaction L-glutamine + H2O = L-glutamate + NH4(+). The catalysed reaction is UTP + NH4(+) + ATP = CTP + ADP + phosphate + 2 H(+). The protein operates within pyrimidine metabolism; CTP biosynthesis via de novo pathway; CTP from UDP: step 2/2. Allosterically activated by GTP, when glutamine is the substrate; GTP has no effect on the reaction when ammonia is the substrate. The allosteric effector GTP functions by stabilizing the protein conformation that binds the tetrahedral intermediate(s) formed during glutamine hydrolysis. Inhibited by the product CTP, via allosteric rather than competitive inhibition. Functionally, catalyzes the ATP-dependent amination of UTP to CTP with either L-glutamine or ammonia as the source of nitrogen. Regulates intracellular CTP levels through interactions with the four ribonucleotide triphosphates. The chain is CTP synthase from Thiobacillus denitrificans (strain ATCC 25259 / T1).